Consider the following 396-residue polypeptide: Gap junction gamma-1 protein (396 aa).

Residues Met-1 to Lys-22 lie on the Cytoplasmic side of the membrane. Residues Ile-23–Tyr-45 form a helical membrane-spanning segment. Residues Asp-46–Arg-75 are Extracellular-facing. Residues Phe-76–Ala-95 traverse the membrane as a helical segment. At Ile-96–Lys-175 the chain is on the cytoplasmic side. A disordered region spans residues Glu-145–Arg-165. Residues Glu-147–Ser-156 are compositionally biased toward basic and acidic residues. The helical transmembrane segment at Ile-176–Leu-198 threads the bilayer. The Extracellular segment spans residues Tyr-199 to Lys-228. A helical membrane pass occupies residues Thr-229 to Trp-248. The Cytoplasmic segment spans residues Glu-249 to Ile-396. The segment at Val-353 to Ile-396 is disordered. The segment covering Ala-376–Ser-387 has biased composition (polar residues).

This sequence belongs to the connexin family. Gamma-type subfamily. A connexon is composed of a hexamer of connexins. Interacts with CNST.

The protein localises to the cell membrane. The protein resides in the cell junction. It localises to the gap junction. Its function is as follows. One gap junction consists of a cluster of closely packed pairs of transmembrane channels, the connexons, through which materials of low MW diffuse from one cell to a neighboring cell. This Homo sapiens (Human) protein is Gap junction gamma-1 protein (GJC1).